The sequence spans 130 residues: Ribonuclease P protein component 2 (130 aa).

It belongs to the eukaryotic/archaeal RNase P protein component 2 family. Consists of a catalytic RNA component and at least 4-5 protein subunits.

The protein resides in the cytoplasm. It catalyses the reaction Endonucleolytic cleavage of RNA, removing 5'-extranucleotides from tRNA precursor.. In terms of biological role, part of ribonuclease P, a protein complex that generates mature tRNA molecules by cleaving their 5'-ends. The sequence is that of Ribonuclease P protein component 2 from Methanococcus maripaludis (strain C5 / ATCC BAA-1333).